The following is a 100-amino-acid chain: NADH-quinone oxidoreductase subunit K (100 aa).

The next 3 membrane-spanning stretches (helical) occupy residues 4 to 24 (LNYG…SLLI), 29 to 49 (IFIL…FILI), and 60 to 80 (VLYI…LAIF).

The protein belongs to the complex I subunit 4L family. As to quaternary structure, NDH-1 is composed of 13 different subunits. Subunits NuoA, H, J, K, L, M, N constitute the membrane sector of the complex.

The protein localises to the cell membrane. It catalyses the reaction a quinone + NADH + 5 H(+)(in) = a quinol + NAD(+) + 4 H(+)(out). Functionally, NDH-1 shuttles electrons from NADH, via FMN and iron-sulfur (Fe-S) centers, to quinones in the respiratory chain. The immediate electron acceptor for the enzyme in this species is believed to be ubiquinone. Couples the redox reaction to proton translocation (for every two electrons transferred, four hydrogen ions are translocated across the cytoplasmic membrane), and thus conserves the redox energy in a proton gradient. The polypeptide is NADH-quinone oxidoreductase subunit K (Buchnera aphidicola subsp. Cinara cedri (strain Cc)).